The sequence spans 573 residues: Sulfate adenylyltransferase (573 aa).

An N-terminal region spans residues 1 to 169 (MANSPHGGVL…LEAVNRLQHY (169 aa)). The segment at 170–394 (DFVELRYTPS…LRESHPPRSQ (225 aa)) is catalytic. Glutamine 197 is a binding site for sulfate. ATP contacts are provided by residues 197 to 200 (QTRN) and 291 to 294 (GRDH). Active-site residues include threonine 198, arginine 199, and asparagine 200. Residue arginine 199 participates in sulfate binding. Alanine 295 serves as a coordination point for sulfate. Methionine 333 is a binding site for ATP. Residues 395-573 (QGFTIFLTGY…LESQGLLDRF (179 aa)) form an allosteric regulation domain; adenylyl-sulfate kinase-like region. 3'-phosphoadenylyl sulfate-binding positions include 434–437 (ETVR), arginine 451, 477–478 (IA), and arginine 515.

It in the N-terminal section; belongs to the sulfate adenylyltransferase family. This sequence in the C-terminal section; belongs to the APS kinase family. As to quaternary structure, homohexamer. Dimer of trimers.

The protein localises to the cytoplasm. It catalyses the reaction sulfate + ATP + H(+) = adenosine 5'-phosphosulfate + diphosphate. Its pathway is sulfur metabolism; hydrogen sulfide biosynthesis; sulfite from sulfate: step 1/3. Its activity is regulated as follows. Allosterically inhibited by 3'-phosphoadenosine 5'-phosphosulfate (PAPS). In terms of biological role, catalyzes the first intracellular reaction of sulfate assimilation, forming adenosine-5'-phosphosulfate (APS) from inorganic sulfate and ATP. Plays an important role in sulfate activation as a component of the biosynthesis pathway of sulfur-containing amino acids. This Chaetomium globosum (strain ATCC 6205 / CBS 148.51 / DSM 1962 / NBRC 6347 / NRRL 1970) (Soil fungus) protein is Sulfate adenylyltransferase.